The primary structure comprises 226 residues: Gap junction beta-2 protein (226 aa).

An intramembrane segment occupies 2–13 (DWSALQTILGGV). Residues 14 to 20 (NKHSTSI) lie on the Cytoplasmic side of the membrane. Residues 21-40 (GKIWLTVLFIFRIMILVVAA) form a helical membrane-spanning segment. Residues 41 to 73 (KEVWGDEQADFVCNTLQPGCKNVCYDHYFPISH) lie on the Extracellular side of the membrane. The Ca(2+) site is built by glutamate 42, glycine 45, and glutamate 47. Cystine bridges form between cysteine 53/cysteine 180, cysteine 60/cysteine 174, and cysteine 64/cysteine 169. Residues 74 to 94 (IRLWALQLIFVSTPALLVAMH) form a helical membrane-spanning segment. The Cytoplasmic segment spans residues 95 to 135 (VAYYRHEKKRKFIRGEIKTEFKDIEEIKNQKVRIEGSLWWT). A helical transmembrane segment spans residues 136–156 (YTGSIFFRVIFEAAFMYVFYV). The Extracellular segment spans residues 157–189 (MYDGFAMQRLVKCNAWPCPNTVDCFVSRPTEKT). Residues 190-210 (VFTVFMIAVSGICILLNVTEL) form a helical membrane-spanning segment. Over 211-226 (CYLLIRFCSGKSKKPV) the chain is Cytoplasmic.

This sequence belongs to the connexin family. Beta-type (group I) subfamily. As to quaternary structure, a hemichannel or connexon is composed of a hexamer of connexins. A functional gap junction is formed by the apposition of two hemichannels. Forms heteromeric channels with GJB4. Interacts with CNST.

It is found in the cell membrane. Its subcellular location is the cell junction. The protein localises to the gap junction. Structural component of gap junctions. Gap junctions are dodecameric channels that connect the cytoplasm of adjoining cells. They are formed by the docking of two hexameric hemichannels, one from each cell membrane. Small molecules and ions diffuse from one cell to a neighboring cell via the central pore. This is Gap junction beta-2 protein (GJB2) from Ovis aries (Sheep).